Consider the following 116-residue polypeptide: UPF0102 protein PERMA_0362 (116 aa).

The protein belongs to the UPF0102 family.

This Persephonella marina (strain DSM 14350 / EX-H1) protein is UPF0102 protein PERMA_0362.